We begin with the raw amino-acid sequence, 288 residues long: Ion-translocating oxidoreductase complex subunit D (288 aa).

The next 9 membrane-spanning stretches (helical) occupy residues 26-46, 47-67, 80-100, 101-121, 126-146, 159-179, 200-220, 235-255, and 256-276; these read IVALLPISAAAVYFFGFAALG, NIIASILGAVGIEFVIQKAFN, LGLLLALICPPTLPAWMIFIG, GAFAVGVGKHAFGGIGSYTFH, AWVFLSLAWAQDMLPGTIPIL, GFLTDVSPILVLLAGVILILV, VLGDPLAYVVSGTFLLGVFFI, IVYGILCGFLTVIYGYFSGNY, and VWGTLYALLLSNAVAPFIELK.

This sequence belongs to the NqrB/RnfD family. In terms of assembly, the Rnf complex is probably composed of eight subunits, including RnfA, RnfB, RnfC, RnfD, RnfE and RnfG. FMN serves as cofactor.

Its subcellular location is the cell membrane. Part of a membrane-bound complex that couples electron transfer with translocation of ions across the membrane. Catalyzes Na(+) transport, most probably coupled to electron transfer from reduced ferredoxin to methanophenazine and heterodisulfide reductase. Involved in heterodisulfide reduction during methanogenesis from acetate. The polypeptide is Ion-translocating oxidoreductase complex subunit D (Methanosarcina acetivorans (strain ATCC 35395 / DSM 2834 / JCM 12185 / C2A)).